A 620-amino-acid chain; its full sequence is Lamin-B2 (620 aa).

The interval 1–38 (MSPPSPGRRREQRRPRAAATMATPLPGRAGGPATPLSP) is disordered. Residues 1–48 (MSPPSPGRRREQRRPRAAATMATPLPGRAGGPATPLSPTRLSRLQEKE) are head. A phosphothreonine mark is found at Thr-23 and Thr-34. Phosphoserine is present on Ser-37. Residues 46 to 402 (EKEELRELND…KLLEGEEERL (357 aa)) form the IF rod domain. The coil 1A stretch occupies residues 49–83 (ELRELNDRLAHYIDRVRALELENDRLLLKISEKEE). Lys-77 is covalently cross-linked (Glycyl lysine isopeptide (Lys-Gly) (interchain with G-Cter in SUMO2)). Residue Lys-81 is modified to N6-acetyllysine; alternate. Lys-81 participates in a covalent cross-link: Glycyl lysine isopeptide (Lys-Gly) (interchain with G-Cter in SUMO2); alternate. Positions 84 to 95 (VTTREVSGIKAL) are linker 1. Positions 96-229 (YESELADARR…DFRKSVFEEE (134 aa)) are coil 1B. Glycyl lysine isopeptide (Lys-Gly) (interchain with G-Cter in SUMO2) cross-links involve residues Lys-195 and Lys-255. The tract at residues 230–256 (VRETRRRHERRLVEVDSSRQQEYDFKM) is linker 2. Residues 257–400 (AQALEELRSQ…YRKLLEGEEE (144 aa)) are coil 2. A phosphoserine mark is found at Ser-316 and Ser-407. A disordered region spans residues 399-464 (EERLKLSPSP…GTGGSGGFHL (66 aa)). The tract at residues 401–620 (RLKLSPSPSS…RTTSRGCYVM (220 aa)) is tail. The segment covering 404 to 431 (LSPSPSSRVTVSRATSSSSGSLSATGRL) has biased composition (low complexity). Thr-413 is a glycosylation site (O-linked (GlcNAc) threonine). 4 positions are modified to phosphoserine: Ser-420, Ser-422, Ser-424, and Ser-426. Position 433 is an omega-N-methylarginine (Arg-433). Positions 435–440 (KRKRLE) match the Nuclear localization signal motif. The span at 444–453 (PLGSGPSVLG) shows a compositional bias: low complexity. An LTD domain is found at 462–579 (FHLAQQASAS…EEVAMRTVKK (118 aa)). Lys-489 is covalently cross-linked (Glycyl lysine isopeptide (Lys-Gly) (interchain with G-Cter in SUMO2)). Ser-497 bears the Phosphoserine mark. The disordered stretch occupies residues 581-620 (SVMRENENGEEEEEEAEFGEEDLFHQQGDPRTTSRGCYVM). A compositionally biased stretch (acidic residues) spans 588–601 (NGEEEEEEAEFGEE). Residues 609–620 (DPRTTSRGCYVM) are compositionally biased toward polar residues. Position 617 is a cysteine methyl ester (Cys-617). Cys-617 is lipidated: S-farnesyl cysteine. The propeptide at 618–620 (YVM) is removed in mature form.

The protein belongs to the intermediate filament family. Dimer. Lamin dimers then assemble into dimeric head-to-tail polymers. Ultimately, two head-to-tail polymers assemble laterally into a protofilament with a uniformly shaped rod of 3.5 nm in diameter. Interacts with TMEM43. Post-translationally, B-type lamins undergo a series of modifications, such as farnesylation and phosphorylation. Increased phosphorylation of the lamins occurs before envelope disintegration and probably plays a role in regulating lamin associations. In terms of processing, phosphorylation plays a key role in lamin organization, subcellular localization and nuclear envelope disintegration. Phosphorylation by CDK1 at Ser-37 and Ser-407 at the onset of mitosis drives lamin disassembly and nuclear envelope breakdown.

Its subcellular location is the nucleus lamina. In terms of biological role, lamins are intermediate filament proteins that assemble into a filamentous meshwork, and which constitute the major components of the nuclear lamina, a fibrous layer on the nucleoplasmic side of the inner nuclear membrane. Lamins provide a framework for the nuclear envelope, bridging the nuclear envelope and chromatin, thereby playing an important role in nuclear assembly, chromatin organization, nuclear membrane and telomere dynamics. The structural integrity of the lamina is strictly controlled by the cell cycle, as seen by the disintegration and formation of the nuclear envelope in prophase and telophase, respectively. The chain is Lamin-B2 (LMNB2) from Homo sapiens (Human).